A 136-amino-acid polypeptide reads, in one-letter code: Small ribosomal subunit protein eS6 (136 aa).

This sequence belongs to the eukaryotic ribosomal protein eS6 family.

The chain is Small ribosomal subunit protein eS6 from Methanosarcina mazei (strain ATCC BAA-159 / DSM 3647 / Goe1 / Go1 / JCM 11833 / OCM 88) (Methanosarcina frisia).